We begin with the raw amino-acid sequence, 176 residues long: dCTP deaminase (176 aa).

Residues 99–104 (RSTLAR) and D115 contribute to the dCTP site. The active-site Proton donor/acceptor is the E125. DCTP is bound at residue Q163.

The protein belongs to the dCTP deaminase family. Homotrimer.

It carries out the reaction dCTP + H2O + H(+) = dUTP + NH4(+). It functions in the pathway pyrimidine metabolism; dUMP biosynthesis; dUMP from dCTP (dUTP route): step 1/2. Catalyzes the deamination of dCTP to dUTP. This Pyrobaculum arsenaticum (strain DSM 13514 / JCM 11321 / PZ6) protein is dCTP deaminase.